The primary structure comprises 148 residues: Large-conductance mechanosensitive channel (148 aa).

A run of 2 helical transmembrane segments spans residues 15–35 (LDMA…KSLV) and 84–104 (VGVF…VFLL).

The protein belongs to the MscL family. As to quaternary structure, homopentamer.

The protein localises to the cell inner membrane. In terms of biological role, channel that opens in response to stretch forces in the membrane lipid bilayer. May participate in the regulation of osmotic pressure changes within the cell. The protein is Large-conductance mechanosensitive channel of Nitratidesulfovibrio vulgaris (strain DSM 19637 / Miyazaki F) (Desulfovibrio vulgaris).